We begin with the raw amino-acid sequence, 461 residues long: MKRTQILDALNASAPCDDIRICGWVRTRRDAKGFSFLELNDGSCLTNIQVIVDEETDAYRSVGEATTGASVDIRGQLVESPGKGQKWEVRAATMTLLGKADPETFPLQKKRHSDEYLRTIAHLRPRTNKFGAAFRIRAEASYAVHSFFRENGFFNVHTPILTGSDCEGAGEMFRVTTLPAVGASAPAEGSVFDGDFFGKECSLTVSGQLEAEIMAQSLGKVYTFGPTFRAENSNTPRHAAEFWMVEPEMAFADLEDDMQLAEDMVKYVISHVMKHCAADLDLFCKFVDKELSARLENILAHPFARVSYTEAIEILKASGRKFEYPAEWGADLQTEHERYLAEEHFKKPVAVYDYPKEIKAFYMRLNDDGKTVAAMDLLVPRIGELVGGSQREERLDVLEARIKELGQNPDDYWWYLELRKFGTAPHAGFGMGFERLLMLLTGIGNIRDVIPFPRTPRHLEF.

Belongs to the class-II aminoacyl-tRNA synthetase family. As to quaternary structure, homodimer.

It is found in the cytoplasm. It carries out the reaction tRNA(Asn) + L-asparagine + ATP = L-asparaginyl-tRNA(Asn) + AMP + diphosphate + H(+). The polypeptide is Asparagine--tRNA ligase (Oleidesulfovibrio alaskensis (strain ATCC BAA-1058 / DSM 17464 / G20) (Desulfovibrio alaskensis)).